The sequence spans 623 residues: Glutathione import ATP-binding protein GsiA (623 aa).

ABC transporter domains follow at residues 15–269 and 314–564; these read VENL…RALL and LRVR…RKLL. Residues 49–56 and 357–364 each bind ATP; these read GESGSGKS.

Belongs to the ABC transporter superfamily. Glutathione importer (TC 3.A.1.5.11) family. The complex is composed of two ATP-binding proteins (GsiA), two transmembrane proteins (GsiC and GsiD) and a solute-binding protein (GsiB).

It is found in the cell inner membrane. It carries out the reaction glutathione(out) + ATP + H2O = glutathione(in) + ADP + phosphate + H(+). Its function is as follows. Part of the ABC transporter complex GsiABCD involved in glutathione import. Responsible for energy coupling to the transport system. The chain is Glutathione import ATP-binding protein GsiA from Shigella flexneri serotype 5b (strain 8401).